The chain runs to 291 residues: ATP synthase gamma chain (291 aa).

Belongs to the ATPase gamma chain family. F-type ATPases have 2 components, CF(1) - the catalytic core - and CF(0) - the membrane proton channel. CF(1) has five subunits: alpha(3), beta(3), gamma(1), delta(1), epsilon(1). CF(0) has three main subunits: a, b and c.

The protein localises to the cell inner membrane. In terms of biological role, produces ATP from ADP in the presence of a proton gradient across the membrane. The gamma chain is believed to be important in regulating ATPase activity and the flow of protons through the CF(0) complex. This chain is ATP synthase gamma chain, found in Sphingopyxis alaskensis (strain DSM 13593 / LMG 18877 / RB2256) (Sphingomonas alaskensis).